A 238-amino-acid polypeptide reads, in one-letter code: Probable transcriptional regulatory protein SZO_02930 (238 aa).

This sequence belongs to the TACO1 family. YeeN subfamily.

The protein localises to the cytoplasm. The chain is Probable transcriptional regulatory protein SZO_02930 from Streptococcus equi subsp. zooepidemicus (strain H70).